We begin with the raw amino-acid sequence, 368 residues long: Protein mab-21-like (368 aa).

Belongs to the mab-21 family.

This is Protein mab-21-like from Drosophila melanogaster (Fruit fly).